Reading from the N-terminus, the 333-residue chain is Ferrochelatase (333 aa).

2 residues coordinate Fe cation: His-202 and Glu-284.

This sequence belongs to the ferrochelatase family.

It is found in the cytoplasm. The enzyme catalyses heme b + 2 H(+) = protoporphyrin IX + Fe(2+). The protein operates within porphyrin-containing compound metabolism; protoheme biosynthesis; protoheme from protoporphyrin-IX: step 1/1. Functionally, catalyzes the ferrous insertion into protoporphyrin IX. The sequence is that of Ferrochelatase from Francisella tularensis subsp. novicida (strain U112).